Consider the following 349-residue polypeptide: MSNLFFVILLAVGFGVWKVLDYFQLPNTFSILLLILTALSGVLWCYHRFVVLPKRHRQVARAEQRSGKTLSEEEKAKIEPISEASEFLSSLFPVLAVVFLVRSFLFEPFQIPSGSMESTLRVGDFLVVNKYAYGVKDPIFQNTIIAGEKPQRGDVIVFKAPQQALIRTGLGATRAAFAENLALSSKDNMSGVDYIKRIVGKGGDRVIFDVEQKTLKVVYGKEGKPCEIDCETKAFEYTQNPTNPAFPNELELTEKGDVTHNVLISEYRRYSDLEFFPQEGMQTAEWLVPEGQYFVMGDHRDHSDDSRFWGFVPEKNIVGKATYIWMSLEKEANEWPTGFRFERFFTAIK.

2 consecutive transmembrane segments (helical) span residues 3–23 (NLFF…LDYF) and 25–45 (LPNT…VLWC). Residues 46 to 80 (YHRFVVLPKRHRQVARAEQRSGKTLSEEEKAKIEP) lie on the Cytoplasmic side of the membrane. A helical membrane pass occupies residues 81 to 101 (ISEASEFLSSLFPVLAVVFLV). Topologically, residues 102–349 (RSFLFEPFQI…RFERFFTAIK (248 aa)) are periplasmic. Active-site residues include Ser-115 and Lys-196.

It belongs to the peptidase S26 family.

It localises to the cell inner membrane. The enzyme catalyses Cleavage of hydrophobic, N-terminal signal or leader sequences from secreted and periplasmic proteins.. This Haemophilus influenzae (strain ATCC 51907 / DSM 11121 / KW20 / Rd) protein is Signal peptidase I (lepB).